The primary structure comprises 310 residues: 2-methoxy-6-polyprenyl-1,4-benzoquinol methylase, mitochondrial (310 aa).

The transit peptide at 1–6 (MAHMRS) directs the protein to the mitochondrion. S-adenosyl-L-methionine contacts are provided by residues Thr-99, Asp-154, and 182–183 (DA).

Belongs to the class I-like SAM-binding methyltransferase superfamily. MenG/UbiE family. As to quaternary structure, component of a multi-subunit COQ enzyme complex, composed of at least coq3, coq4, coq5, coq6, coq7 and coq9.

It is found in the mitochondrion inner membrane. The enzyme catalyses a 2-methoxy-6-(all-trans-polyprenyl)benzene-1,4-diol + S-adenosyl-L-methionine = a 5-methoxy-2-methyl-3-(all-trans-polyprenyl)benzene-1,4-diol + S-adenosyl-L-homocysteine + H(+). It participates in cofactor biosynthesis; ubiquinone biosynthesis. Functionally, methyltransferase required for the conversion of 2-polyprenyl-6-methoxy-1,4-benzoquinol (DDMQH2) to 2-polyprenyl-3-methyl-6-methoxy-1,4-benzoquinol (DMQH2). The chain is 2-methoxy-6-polyprenyl-1,4-benzoquinol methylase, mitochondrial from Xenopus laevis (African clawed frog).